The primary structure comprises 173 residues: Disulfide bond formation protein B (173 aa).

At 1–14 (MIEFLRRIAAHRLA) the chain is on the cytoplasmic side. The chain crosses the membrane as a helical span at residues 15-31 (WGLLAASALFLELSALF). Residues 32-49 (FQYVLGLHPCVMCVYERL) are Periplasmic-facing. A disulfide bond links C41 and C44. A helical membrane pass occupies residues 50–65 (AILGVLSAGLLGMVAP). Residues 66-72 (EKWYLRW) lie on the Cytoplasmic side of the membrane. The helical transmembrane segment at 73 to 90 (SALLLWGYSAFRGLQLAL) threads the bilayer. At 91–145 (KHVDYQMNPSPFNVCSPFADFPSWAPLDQWLPWLFFPDGDCSEISWQFLSFSMPQ) the chain is on the periplasmic side. A disulfide bridge connects residues C105 and C131. Residues 146–164 (WLVAIFAAYLLVFVVVTIG) form a helical membrane-spanning segment. The Cytoplasmic portion of the chain corresponds to 165-173 (NLVKGRCCS).

Belongs to the DsbB family.

Its subcellular location is the cell inner membrane. Required for disulfide bond formation in some periplasmic proteins. Acts by oxidizing the DsbA protein. The sequence is that of Disulfide bond formation protein B from Aeromonas salmonicida (strain A449).